Consider the following 126-residue polypeptide: Late histone H2A.L3 (126 aa).

Positions 1–20 are disordered; the sequence is MSGRGKGAGKARAKAKSRSA. At serine 2 the chain carries N-acetylserine. Residue serine 2 is modified to Phosphoserine. The segment covering 7-19 has biased composition (basic residues); that stretch reads GAGKARAKAKSRS. At glutamine 105 the chain carries N5-methylglutamine. A Glycyl lysine isopeptide (Lys-Gly) (interchain with G-Cter in ubiquitin) cross-link involves residue lysine 120.

It belongs to the histone H2A family. The nucleosome is a histone octamer containing two molecules each of H2A, H2B, H3 and H4 assembled in one H3-H4 heterotetramer and two H2A-H2B heterodimers. The octamer wraps approximately 147 bp of DNA. Monoubiquitination of Lys-120 gives a specific tag for epigenetic transcriptional repression. In terms of processing, phosphorylation of Ser-2 directly represses transcription.

It localises to the nucleus. Its subcellular location is the chromosome. Its function is as follows. Core component of nucleosome. Nucleosomes wrap and compact DNA into chromatin, limiting DNA accessibility to the cellular machineries which require DNA as a template. Histones thereby play a central role in transcription regulation, DNA repair, DNA replication and chromosomal stability. DNA accessibility is regulated via a complex set of post-translational modifications of histones, also called histone code, and nucleosome remodeling. The protein is Late histone H2A.L3 of Strongylocentrotus purpuratus (Purple sea urchin).